The following is a 699-amino-acid chain: Elongation factor G (699 aa).

The 281-residue stretch at 8–288 (EDYRNFGIMA…AVVDYLPSPI (281 aa)) folds into the tr-type G domain. GTP contacts are provided by residues 17 to 24 (AHIDAGKT), 86 to 90 (DTPGH), and 140 to 143 (NKMD).

It belongs to the TRAFAC class translation factor GTPase superfamily. Classic translation factor GTPase family. EF-G/EF-2 subfamily.

Its subcellular location is the cytoplasm. Functionally, catalyzes the GTP-dependent ribosomal translocation step during translation elongation. During this step, the ribosome changes from the pre-translocational (PRE) to the post-translocational (POST) state as the newly formed A-site-bound peptidyl-tRNA and P-site-bound deacylated tRNA move to the P and E sites, respectively. Catalyzes the coordinated movement of the two tRNA molecules, the mRNA and conformational changes in the ribosome. The polypeptide is Elongation factor G (Rhizobium meliloti (strain 1021) (Ensifer meliloti)).